The sequence spans 253 residues: uncharacterized protein (253 aa).

A helical transmembrane segment spans residues 62–78 (WCSIGWSIGALIIFLVY). Positions 141–158 (TTPQTTTPEIPSSTEPQE) are enriched in low complexity. The interval 141 to 225 (TTPQTTTPEI…HDNQPLEERH (85 aa)) is disordered. Residues 200–216 (NVEDEPPPNKPEEEEDH) are compositionally biased toward acidic residues.

It is found in the host membrane. This is an uncharacterized protein from Aedes vexans (Inland floodwater mosquito).